Here is a 229-residue protein sequence, read N- to C-terminus: Uracil-DNA glycosylase (229 aa).

Catalysis depends on aspartate 64, which acts as the Proton acceptor.

Belongs to the uracil-DNA glycosylase (UDG) superfamily. UNG family.

It localises to the cytoplasm. The enzyme catalyses Hydrolyzes single-stranded DNA or mismatched double-stranded DNA and polynucleotides, releasing free uracil.. Its function is as follows. Excises uracil residues from the DNA which can arise as a result of misincorporation of dUMP residues by DNA polymerase or due to deamination of cytosine. The sequence is that of Uracil-DNA glycosylase from Klebsiella pneumoniae subsp. pneumoniae (strain ATCC 700721 / MGH 78578).